A 300-amino-acid chain; its full sequence is Hairy/enhancer-of-split related with YRPW motif protein 1 (300 aa).

Residues 1–52 (MKRGHDYSSSDSELDENIEVEKESADENGNLSSAAGSMSPSTSSQILARKRR) form a disordered region. A compositionally biased stretch (low complexity) spans 32-44 (SSAAGSMSPSTSS). The region spanning 48-103 (ARKRRRGIIEKRRRDRINNSLSELRRLVPSAFEKQGSAKLEKAEILQMTVDHLKML) is the bHLH domain. The Orange domain occupies 121 to 157 (YRSLGFRECLAEVARYLSIIEGMDTTDPLRVRLVSHL). Residues 199 to 210 (AHTSANSTSSST) are compositionally biased toward low complexity. 2 disordered regions span residues 199–232 (AHTS…LRVP) and 278–300 (LSPT…IGAF). The YRPW motif motif lies at 290-293 (YRPW).

It belongs to the HEY family. Efficient DNA binding requires dimerization with another bHLH protein. Binds DNA in the form of homodimer or more strongly as a heterodimer with hes1/hairy1 or hes4/hairy2b. Also weakly interacts with the bHLH proteins hes2, neurod1 and neurod4/ath3. Interacts (via Orange domain) with ccdc89/boip (via C-terminus).

It localises to the nucleus. Its function is as follows. Downstream effector of Notch signaling. Transcriptional repressor which binds preferentially to the canonical E box sequence 5'-CACGTG-3'. Acts as a suppressor of neurogenesis by antagonizing proneural gene function. Functions during floorplate development. Plays a role in pronephros formation in the inhibition of distal tubule and duct cell fates and the promotion of glomus and proximal tubule formation. This is Hairy/enhancer-of-split related with YRPW motif protein 1 (hey1) from Xenopus tropicalis (Western clawed frog).